An 85-amino-acid chain; its full sequence is MNYLVMISLALLFVTGVESVKDGYIVDDVNCTYFCGRNAYCNEECTKLKGESGYCQWASPYGNACYCYKLPDHVRTKGPGRCHGR.

A signal peptide spans 1-19 (MNYLVMISLALLFVTGVES). The LCN-type CS-alpha/beta domain occupies 21–83 (KDGYIVDDVN…VRTKGPGRCH (63 aa)). 4 cysteine pairs are disulfide-bonded: C31–C82, C35–C55, C41–C65, and C45–C67. H83 is subject to Histidine amide.

The protein belongs to the long (4 C-C) scorpion toxin superfamily. Sodium channel inhibitor family. Alpha subfamily. The amidation of His-83 is not necessary for toxicity. Expressed by the venom gland.

It localises to the secreted. Its function is as follows. Alpha toxin that binds voltage-independently at site-3 of sodium channels (Nav), inhibits the inactivation of the activated channels, and weakly inhibits activation, thereby blocking neuronal transmission. Inserts into voltage-sensing domain IV to stabilize a deactivated state, thereby preventing fast-inactivation. Principally slows the inactivation process of TTX-sensitive sodium channels. It is active on mammalian brain Nav1.2/SCN2A (EC(50)human=0.72 nM, EC(50)rat=2.6 nM), on rat skeletal muscle Nav1.4/SCN4A (EC(50)=2.2 nM), and on human neuronal Nav1.7/SCN9A (EC(50)=6.8-51.7 nM). In vivo, intraplantar injection into mice induces spontaneous pain responses. The sequence is that of Alpha-mammal toxin AaH2 from Androctonus australis (Sahara scorpion).